The following is a 475-amino-acid chain: Gamma-aminobutyric acid receptor subunit gamma-2 (475 aa).

Residues 1 to 39 (MSSPNIWSTGSSVYSTPVFSQKMTLWILLLLSLYPGLTR) form the signal peptide. The Extracellular segment spans residues 41–275 (KSDDDYEDYA…FDLSRRMGYF (235 aa)). 2 N-linked (GlcNAc...) asparagine glycosylation sites follow: asparagine 52 and asparagine 129. Cysteine 190 and cysteine 204 are oxidised to a cystine. N-linked (GlcNAc...) asparagine glycosylation is present at asparagine 247. A helical transmembrane segment spans residues 276–296 (TIQTYIPCTLIVVLSWVSFWI). The Cytoplasmic segment spans residues 297-302 (NKDAVP). Residues 303-322 (ARTSLGITTVLTMTTLSTIA) form a helical membrane-spanning segment. Topologically, residues 323-334 (RKSLPKVSYVTA) are extracellular. The helical transmembrane segment at 335 to 359 (MDLFVSVCFIFVFSALVEYGTLHYF) threads the bilayer. Residues 360–451 (VSNRKPSKDK…IHIRIAKMDS (92 aa)) lie on the Cytoplasmic side of the membrane. Serine 382 is subject to Phosphoserine; by PKC. A helical membrane pass occupies residues 452-472 (YARIFFPTAFCLFNLVYWVSY). Residues 473–475 (LYL) lie on the Extracellular side of the membrane.

It belongs to the ligand-gated ion channel (TC 1.A.9) family. Gamma-aminobutyric acid receptor (TC 1.A.9.5) subfamily. GABRG2 sub-subfamily. In terms of assembly, heteropentamer, formed by a combination of alpha (GABRA1-6), beta (GABRB1-3), gamma (GABRG1-3), delta (GABRD), epsilon (GABRE), rho (GABRR1-3), pi (GABRP) and theta (GABRQ) chains, each subunit exhibiting distinct physiological and pharmacological properties. Interacts with GABARAP. Interacts with KIF21B. Identified in a complex of 720 kDa composed of LHFPL4, NLGN2, GABRA1, GABRB2, GABRG2 and GABRB3. Interacts with LHFPL4. Interacts with SHISA7; interaction leads to the regulation of GABA(A) receptor trafficking, channel deactivation kinetics and pharmacology. Post-translationally, palmitoylated by ZDHHC3/GODZ; required for the accumulation of GABA(A) receptors at the postsynaptic membrane of inhibitory GABAergic synapses. In terms of processing, glycosylated.

It is found in the postsynaptic cell membrane. The protein localises to the cell membrane. It localises to the cell projection. Its subcellular location is the dendrite. The protein resides in the cytoplasmic vesicle membrane. It catalyses the reaction chloride(in) = chloride(out). Its activity is regulated as follows. Allosterically activated by benzodiazepines. Activated by pentobarbital. Inhibited by the antagonist bicuculline. Inhibited by zinc ions. Potentiated by histamine. In terms of biological role, gamma subunit of the heteropentameric ligand-gated chloride channel gated by gamma-aminobutyric acid (GABA), a major inhibitory neurotransmitter in the brain. GABA-gated chloride channels, also named GABA(A) receptors (GABAAR), consist of five subunits arranged around a central pore and contain GABA active binding site(s) located at the alpha and beta subunit interface(s). When activated by GABA, GABAARs selectively allow the flow of chloride anions across the cell membrane down their electrochemical gradient. Gamma-2/GABRG2-containing GABAARs are found at both synaptic and extrasynaptic sites. Chloride influx into the postsynaptic neuron following GABAAR opening decreases the neuron ability to generate a new action potential, thereby reducing nerve transmission. GABAARs containing alpha-1 and beta-2 or -3 subunits exhibit synaptogenic activity; the gamma-2 subunit being necessary but not sufficient to induce rapid synaptic contacts formation. Extrasynaptic gamma-2-containing receptors contribute to the tonic GABAergic inhibition. GABAARs function also as histamine receptor where histamine binds at the interface of two neighboring beta subunits and potentiates GABA response in a gamma-2 subunit-controlled manner. The protein is Gamma-aminobutyric acid receptor subunit gamma-2 (GABRG2) of Bos taurus (Bovine).